The chain runs to 130 residues: Fumarate reductase subunit C (130 aa).

A run of 3 helical transmembrane segments spans residues 34–54 (VPAV…KGGV), 60–80 (FVGF…LLAA), and 109–129 (IVKT…AVAL).

This sequence belongs to the FrdC family. As to quaternary structure, part of an enzyme complex containing four subunits: a flavoprotein (FrdA), an iron-sulfur protein (FrdB), and two hydrophobic anchor proteins (FrdC and FrdD).

The protein resides in the cell inner membrane. Functionally, two distinct, membrane-bound, FAD-containing enzymes are responsible for the catalysis of fumarate and succinate interconversion; fumarate reductase is used in anaerobic growth, and succinate dehydrogenase is used in aerobic growth. Anchors the catalytic components of the fumarate reductase complex to the cell inner membrane, binds quinones. This chain is Fumarate reductase subunit C, found in Serratia proteamaculans (strain 568).